The chain runs to 124 residues: Fluoride-specific ion channel FluC (124 aa).

The next 4 membrane-spanning stretches (helical) occupy residues V4–L24, F35–G55, P62–F82, and L95–L115. Na(+) is bound by residues G74 and T77.

Belongs to the fluoride channel Fluc/FEX (TC 1.A.43) family.

It localises to the cell inner membrane. It catalyses the reaction fluoride(in) = fluoride(out). Its activity is regulated as follows. Na(+) is not transported, but it plays an essential structural role and its presence is essential for fluoride channel function. Functionally, fluoride-specific ion channel. Important for reducing fluoride concentration in the cell, thus reducing its toxicity. The chain is Fluoride-specific ion channel FluC from Shewanella halifaxensis (strain HAW-EB4).